The chain runs to 152 residues: Transcriptional regulator MraZ (152 aa).

SpoVT-AbrB domains follow at residues 5–52 (AQAI…PLKE) and 81–124 (ATEC…SETE).

This sequence belongs to the MraZ family. Forms oligomers.

It is found in the cytoplasm. It localises to the nucleoid. The sequence is that of Transcriptional regulator MraZ from Mannheimia succiniciproducens (strain KCTC 0769BP / MBEL55E).